Here is a 708-residue protein sequence, read N- to C-terminus: Polyribonucleotide nucleotidyltransferase (708 aa).

The Mg(2+) site is built by aspartate 490 and aspartate 496. One can recognise a KH domain in the interval 557-619 (PRIETMTIPK…KSIDDAIRLI (63 aa)). The 71-residue stretch at 629–699 (GEVYKGKVRS…KTGKFKLSRK (71 aa)) folds into the S1 motif domain.

It belongs to the polyribonucleotide nucleotidyltransferase family. The cofactor is Mg(2+).

The protein resides in the cytoplasm. It catalyses the reaction RNA(n+1) + phosphate = RNA(n) + a ribonucleoside 5'-diphosphate. In terms of biological role, involved in mRNA degradation. Catalyzes the phosphorolysis of single-stranded polyribonucleotides processively in the 3'- to 5'-direction. In Bacteroides fragilis (strain ATCC 25285 / DSM 2151 / CCUG 4856 / JCM 11019 / LMG 10263 / NCTC 9343 / Onslow / VPI 2553 / EN-2), this protein is Polyribonucleotide nucleotidyltransferase.